The chain runs to 169 residues: Macrocypin-1a (169 aa).

This sequence belongs to the protease inhibitor I85 family.

Functionally, inhibits papain and cysteine cathepsin endopeptidases, and also inhibits cathepsins B and H, which exhibit both exopeptidase and endopeptidase activities. The polypeptide is Macrocypin-1a (Macrolepiota procera (Parasol mushroom)).